The following is a 615-amino-acid chain: Melanopsin-B (615 aa).

The Extracellular portion of the chain corresponds to 1-19 (MDMDRGFYRKVDVPDHAHY). A helical membrane pass occupies residues 20-40 (VIAFFVLIIGVVGVTGNALVM). The Cytoplasmic segment spans residues 41 to 56 (YAFLCNKKLRTPPNYF). A helical membrane pass occupies residues 57–77 (IMNLAVSDFLMAITQSPIFFI). The Extracellular portion of the chain corresponds to 78-93 (NSLFKEWIFGETGCRM). C91 and C169 are disulfide-bonded. The chain crosses the membrane as a helical span at residues 94–114 (YAFCGALFGITSMINLLAISL). Residues 115 to 136 (DRYIVITKPPQAIRWVSGRRTM) are Cytoplasmic-facing. A helical membrane pass occupies residues 137 to 157 (VVILLVWLYSLAWSLAPLLGW). The Extracellular portion of the chain corresponds to 158–189 (SSYIPEGLMTSCTWDYVTSTPANKGYTLMLCC). The helical transmembrane segment at 190 to 210 (FVFFIPLGIISYCYLCMFLAI) threads the bilayer. Topologically, residues 211-244 (RSAGREIERLGTQVRKSTLMQQQTIKTEWKLTKV) are cytoplasmic. Residues 245 to 265 (AFVVIIVYVHSWSPYACVTLI) traverse the membrane as a helical segment. Residues 266–279 (AWAGYGSHLSPYSK) are Extracellular-facing. Residues 280–300 (AVPAVIAKASAIYNPFIYAII) traverse the membrane as a helical segment. The residue at position 287 (K287) is an N6-(retinylidene)lysine. Topologically, residues 301-615 (HSKYRDTLAE…RNLEESFMAL (315 aa)) are cytoplasmic. Disordered stretches follow at residues 390–420 (LGRSKEHRGPPAQQNRQTRSSDTLEQATVAD) and 465–502 (NKHPNNNHKNHNNRHNGNNNNEEHEYSGKGGRHCQNHP). Residues 401–415 (AQQNRQTRSSDTLEQ) are compositionally biased toward polar residues. A compositionally biased stretch (basic residues) spans 469-478 (NNNHKNHNNR).

Belongs to the G-protein coupled receptor 1 family. Opsin subfamily. As to expression, expressed in the inner nuclear layer of the retina, possibly in amacrine and ganglion cells. Expressed in a subpopulation of neurons in the dorsal habenula.

It is found in the cell membrane. In terms of biological role, photoreceptor implicated in non-image-forming responses to light. The sequence is that of Melanopsin-B (opn4b) from Gadus morhua (Atlantic cod).